We begin with the raw amino-acid sequence, 504 residues long: Anaerobic nitric oxide reductase transcription regulator NorR (504 aa).

Asp57 is modified (4-aspartylphosphate). A Sigma-54 factor interaction domain is found at 187–416 (MIGLSPGMTQ…LEHAIHRAVV (230 aa)). ATP is bound by residues 215–222 (GETGTGKE) and 278–287 (ADNGTLFLDE). A DNA-binding region (H-T-H motif) is located at residues 479 to 498 (WAACARMLETDVANLHRLAK).

It functions in the pathway nitrogen metabolism; nitric oxide reduction. Its function is as follows. Required for the expression of anaerobic nitric oxide (NO) reductase, acts as a transcriptional activator for at least the norVW operon. Activation also requires sigma-54. This Shigella flexneri serotype 5b (strain 8401) protein is Anaerobic nitric oxide reductase transcription regulator NorR.